A 294-amino-acid polypeptide reads, in one-letter code: Beta-glucoside kinase (294 aa).

5 to 11 (AFDIGGT) lines the ATP pocket.

This sequence belongs to the ROK (NagC/XylR) family.

The catalysed reaction is D-cellobiose + ATP = 6-phospho-beta-D-glucosyl-(1-&gt;4)-D-glucose + ADP + H(+). Its function is as follows. Catalyzes the ATP-dependent phosphorylation of cellobiose to produce cellobiose-6'-P. May have a dual role of kinase and transcriptional regulator of the cellobiose-PTS operon. The chain is Beta-glucoside kinase (bglK) from Listeria monocytogenes serovar 1/2a (strain ATCC BAA-679 / EGD-e).